Consider the following 598-residue polypeptide: Centrosomal protein of 70 kDa (598 aa).

Over residues 16–38 the composition is skewed to polar residues; that stretch reads DSTKEPLSTVTSQAQDSSLSANR. Positions 16–43 are disordered; it reads DSTKEPLSTVTSQAQDSSLSANRPVTEK. Coiled coils occupy residues 99–210 and 255–317; these read TRQQ…EEDR and TYKG…NIKL. A TPR repeat occupies 484–517; it reads NGVYPRMNEVYARLGEMNNAVRNLQELLGLDSSS.

In terms of assembly, directly interacts with tubulin-gamma; this interaction determines centrosomal localization.

It is found in the cytoplasm. The protein resides in the cytoskeleton. Its subcellular location is the microtubule organizing center. It localises to the centrosome. Functionally, plays a role in the organization of both preexisting and nascent microtubules in interphase cells. During mitosis, required for the organization and orientation of the mitotic spindle. In Rattus norvegicus (Rat), this protein is Centrosomal protein of 70 kDa (Cep70).